Here is a 322-residue protein sequence, read N- to C-terminus: Aldo-keto reductase family 1 member C13 (322 aa).

NAD(+) is bound by residues 20-24 (GFGTY) and Asp-50. The Proton donor role is filled by Tyr-55. His-117 is a binding site for substrate. Residues 166–167 (SN), Gln-190, 216–224 (FGALGTQRY), and 270–280 (QSFYESEMKEN) each bind NAD(+).

Belongs to the aldo/keto reductase family. In terms of assembly, monomer. Post-translationally, the N-terminus is blocked.

The enzyme catalyses morphine + NAD(+) = morphinone + NADH + H(+). It carries out the reaction morphine + NADP(+) = morphinone + NADPH + H(+). Its activity is regulated as follows. Strongly inhibited by sulfhydryl reagents and ketamine, but not by pyrazole, barbital and indomethacine. Its function is as follows. Catalyzes the dehydrogenation of morphine to morphinone. The enzyme also exhibits significant activity for a variety of cyclic and alicyclic alcohols. In addition to xenobiotics, the enzyme catalyzes the dehydrogenation of 17-beta-hydroxysteroids with much higher affinities than morphine. Uses both NAD and NADP, but the activity is much greater with NAD than with NADP. In Mesocricetus auratus (Golden hamster), this protein is Aldo-keto reductase family 1 member C13 (AKR1C13).